The following is a 379-amino-acid chain: All-trans-retinol dehydrogenase [NAD(+)] ADH4 (379 aa).

An N-acetylthreonine modification is found at Thr1. Residues Cys46, His68, Cys98, Cys101, Cys104, Cys112, and Cys179 each coordinate Zn(2+). Residues 204-209 (GLGGVG), Asp228, Lys233, 297-299 (VGV), and Arg374 each bind NAD(+).

Belongs to the zinc-containing alcohol dehydrogenase family. Class-II subfamily. In terms of assembly, homodimer. It depends on Zn(2+) as a cofactor.

It localises to the cytoplasm. The catalysed reaction is all-trans-retinol + NAD(+) = all-trans-retinal + NADH + H(+). It carries out the reaction 9-cis-retinol + NAD(+) = 9-cis-retinal + NADH + H(+). The enzyme catalyses 20-oxo-(5Z,8Z,11Z,14Z)-eicosatetraenoate + NAD(+) + H2O = (5Z,8Z,11Z,14Z)-eicosatetraenedioate + NADH + 2 H(+). It catalyses the reaction 20-hydroxy-(5Z,8Z,11Z,14Z)-eicosatetraenoate + NAD(+) = 20-oxo-(5Z,8Z,11Z,14Z)-eicosatetraenoate + NADH + H(+). The catalysed reaction is 1,4-benzoquinone + NADH + H(+) = hydroquinone + NAD(+). Its activity is regulated as follows. Oxidation of 20-HETE is inhibited by low concentrations of N-heptylformamide. Oxidation of 20-HETE is a decreased by 55-65% by either all-trans-retinol or all-trans-retinoic acid. Strongly inhibited by omega-hydroxy fatty acids. Functionally, catalyzes the NAD-dependent oxidation of either all-trans-retinol or 9-cis-retinol. Also oxidizes long chain omega-hydroxy fatty acids, such as 20-HETE, producing both the intermediate aldehyde, 20-oxoarachidonate and the end product, a dicarboxylic acid, (5Z,8Z,11Z,14Z)-eicosatetraenedioate. Also catalyzes the reduction of benzoquinones. This chain is All-trans-retinol dehydrogenase [NAD(+)] ADH4, found in Struthio camelus (Common ostrich).